Here is a 318-residue protein sequence, read N- to C-terminus: 2-keto-3-deoxygluconate permease (318 aa).

Helical transmembrane passes span 10 to 30 (IPGG…TFTP), 42 to 62 (GLIT…GASI), 76 to 96 (VLVV…GAFL), 105 to 125 (LLAG…NGGL), 139 to 159 (AGAF…VILG), 162 to 182 (GIAT…LIGF), 199 to 219 (VQTL…LSVI), 224 to 244 (FAGI…LILA), 254 to 274 (TAGI…LLIA), and 289 to 309 (ALVA…TALW).

This sequence belongs to the KdgT transporter family.

It is found in the cell inner membrane. It carries out the reaction 2-dehydro-3-deoxy-D-gluconate(in) + H(+)(in) = 2-dehydro-3-deoxy-D-gluconate(out) + H(+)(out). In terms of biological role, catalyzes the proton-dependent uptake of 2-keto-3-deoxygluconate (KDG) into the cell. This Pectobacterium atrosepticum (strain SCRI 1043 / ATCC BAA-672) (Erwinia carotovora subsp. atroseptica) protein is 2-keto-3-deoxygluconate permease.